A 210-amino-acid chain; its full sequence is Outer-membrane lipoprotein LolB (210 aa).

Residues 1–29 (MSLISNNEERSLRVRYCIAIALSALLISG) form the signal peptide. Residue cysteine 30 is the site of N-palmitoyl cysteine attachment. Cysteine 30 is lipidated: S-diacylglycerol cysteine.

Belongs to the LolB family. As to quaternary structure, monomer.

Its subcellular location is the cell outer membrane. Its function is as follows. Plays a critical role in the incorporation of lipoproteins in the outer membrane after they are released by the LolA protein. In Coxiella burnetii (strain CbuK_Q154) (Coxiella burnetii (strain Q154)), this protein is Outer-membrane lipoprotein LolB.